Reading from the N-terminus, the 180-residue chain is Orotate phosphoribosyltransferase (180 aa).

Residues Arg-95, Lys-96, Lys-99, and 121–129 (EDVTTTGGS) each bind 5-phospho-alpha-D-ribose 1-diphosphate. 2 residues coordinate orotate: Thr-125 and Arg-153.

The protein belongs to the purine/pyrimidine phosphoribosyltransferase family. PyrE subfamily. Homodimer. It depends on Mg(2+) as a cofactor.

The enzyme catalyses orotidine 5'-phosphate + diphosphate = orotate + 5-phospho-alpha-D-ribose 1-diphosphate. It participates in pyrimidine metabolism; UMP biosynthesis via de novo pathway; UMP from orotate: step 1/2. Catalyzes the transfer of a ribosyl phosphate group from 5-phosphoribose 1-diphosphate to orotate, leading to the formation of orotidine monophosphate (OMP). In Methanothermobacter thermautotrophicus (strain ATCC 29096 / DSM 1053 / JCM 10044 / NBRC 100330 / Delta H) (Methanobacterium thermoautotrophicum), this protein is Orotate phosphoribosyltransferase.